The chain runs to 708 residues: ATP-dependent DNA helicase Hel308 (708 aa).

The short motif at 1-29 (MSIDDLKLPSNVIDIIKNRGIKKLNPPQT) is the Q motif element. ATP is bound by residues glutamine 28 and 46 to 53 (SPTGSGKT). In terms of domain architecture, Helicase ATP-binding spans 33–196 (KKGLLDGNRL…WLGAEPVATN (164 aa)). Positions 145–148 (DELH) match the DEAH box motif. The Helicase C-terminal domain occupies 229–435 (HGDDAIIAYT…ERAFYTFLLG (207 aa)).

It belongs to the helicase family. Hel308 subfamily. As to quaternary structure, monomer.

It carries out the reaction Couples ATP hydrolysis with the unwinding of duplex DNA by translocating in the 3'-5' direction.. The enzyme catalyses ATP + H2O = ADP + phosphate + H(+). Its function is as follows. DNA-dependent ATPase and 3'-5' DNA helicase that may be involved in repair of stalled replication forks. The protein is ATP-dependent DNA helicase Hel308 of Saccharolobus solfataricus (strain ATCC 35092 / DSM 1617 / JCM 11322 / P2) (Sulfolobus solfataricus).